The chain runs to 553 residues: Transmembrane protein DDB_G0292058 (553 aa).

An N-terminal signal peptide occupies residues 1–26; that stretch reads MIKINKILSLLIILLIINCNYQFVKA. A run of 2 helical transmembrane segments spans residues 80–100 and 137–157; these read ILLS…GIIF and VFIL…VFIT. N-linked (GlcNAc...) asparagine glycans are attached at residues Asn162, Asn171, Asn178, and Asn195. 2 consecutive transmembrane segments (helical) span residues 243 to 263 and 274 to 294; these read IIIV…VSAL and SIAL…HYPI. N-linked (GlcNAc...) asparagine glycans are attached at residues Asn315, Asn332, Asn351, Asn396, Asn405, and Asn462. The helical transmembrane segment at 515 to 535 threads the bilayer; it reads LLIAPTAVFAILLTGLGITGI.

It localises to the membrane. The polypeptide is Transmembrane protein DDB_G0292058 (Dictyostelium discoideum (Social amoeba)).